A 303-amino-acid polypeptide reads, in one-letter code: Phytochrome-associated serine/threonine-protein phosphatase 3 (303 aa).

The Zn(2+) site is built by D50, H52, D78, and N110. The active-site Proton donor is H111. H160 and H234 together coordinate Zn(2+).

This sequence belongs to the PPP phosphatase family. PP-6 (PP-V) subfamily. Interacts with PHYA and PHYB, mostly when they are phosphorylated and in Pfr forms. Interacts with TAP46. Interacts with NRP. Interacts with PIN1 and PIN2. Interacts with ABI5. Interacts with PIF3 and PIF4. Protein phosphatase 6 (PP6) holoenzyme is a heterotrimeric complex formed by the catalytic subunit FYPP, a SAPS domain-containing subunit (SAL) and a protein phosphatase 2A regulatory subunit A (PP2AA). Zn(2+) is required as a cofactor. As to expression, mostly expressed in flowers. Also detected to a lower extent in stems and leaves. Expressed in roots.

The protein resides in the cytoplasm. The enzyme catalyses O-phospho-L-seryl-[protein] + H2O = L-seryl-[protein] + phosphate. It carries out the reaction O-phospho-L-threonyl-[protein] + H2O = L-threonyl-[protein] + phosphate. Functionally, catalytic subunit of protein phosphatase 6 (PP6). Dephosphorylates phosphorylated phytochromes, with a preference toward Pfr forms. Plays a major role in the photoperiodic control of flowering time in long days by modulating phytochrome signals in flowering time control. Involved in the regulation of polar auxin transport in roots. Dephosphorylates directly the auxin efflux carriers PIN1 and PIN2, thus promoting their proper polar localization in root cell plasma membrane. Acts antagonistically with the protein kinase PID to regulate the reversible phosphorylation of PIN and polar targeting, subsequently impacting polar auxin transport and plant development. Involved in the regulation of abscisic acid (ABA) signaling during seed germination and postgermination seedling growth. Functions as a negative regulator of ABA signaling through direct dephosphorylation and destabilization of ABI5 protein. Acts antagonistically with the protein kinase SRK2E/SNRK2.6 to regulate ABI5 phosphorylation and ABA responses. Involved in the regulation of phosphorylation status in hypocotyl phototropism. Involved in the negative regulation of photomorphogenesis by controlling the stability and transcriptional activity of PIF3 and PIF4 proteins in the dark, via the regulation of their phosphorylation status. The polypeptide is Phytochrome-associated serine/threonine-protein phosphatase 3 (Arabidopsis thaliana (Mouse-ear cress)).